Here is a 333-residue protein sequence, read N- to C-terminus: Ketol-acid reductoisomerase (NADP(+)) (333 aa).

The KARI N-terminal Rossmann domain occupies 6 to 186 (TRVYTECDAD…GALRAGAIQT (181 aa)). NADP(+) is bound by residues 29–32 (YGSQ), lysine 52, serine 55, serine 57, and 87–90 (DPAQ). The active site involves histidine 112. Residue glycine 138 coordinates NADP(+). Positions 187-332 (TFTEETETDL…ARLRALFSWS (146 aa)) constitute a KARI C-terminal knotted domain. Mg(2+) is bound by residues aspartate 195, glutamate 199, glutamate 231, and glutamate 235. Residue serine 256 coordinates substrate.

Belongs to the ketol-acid reductoisomerase family. Mg(2+) serves as cofactor.

It catalyses the reaction (2R)-2,3-dihydroxy-3-methylbutanoate + NADP(+) = (2S)-2-acetolactate + NADPH + H(+). The catalysed reaction is (2R,3R)-2,3-dihydroxy-3-methylpentanoate + NADP(+) = (S)-2-ethyl-2-hydroxy-3-oxobutanoate + NADPH + H(+). Its pathway is amino-acid biosynthesis; L-isoleucine biosynthesis; L-isoleucine from 2-oxobutanoate: step 2/4. It functions in the pathway amino-acid biosynthesis; L-valine biosynthesis; L-valine from pyruvate: step 2/4. Functionally, involved in the biosynthesis of branched-chain amino acids (BCAA). Catalyzes an alkyl-migration followed by a ketol-acid reduction of (S)-2-acetolactate (S2AL) to yield (R)-2,3-dihydroxy-isovalerate. In the isomerase reaction, S2AL is rearranged via a Mg-dependent methyl migration to produce 3-hydroxy-3-methyl-2-ketobutyrate (HMKB). In the reductase reaction, this 2-ketoacid undergoes a metal-dependent reduction by NADPH to yield (R)-2,3-dihydroxy-isovalerate. This chain is Ketol-acid reductoisomerase (NADP(+)), found in Tropheryma whipplei (strain Twist) (Whipple's bacillus).